Consider the following 395-residue polypeptide: Membrane glycoprotein spo14 (395 aa).

Residues 1 to 346 (MAELHLSFPA…KLEDAGVILR (346 aa)) are Cytoplasmic-facing. 2 WD repeats span residues 250-285 (MIRDLKNAKGVTCFCCDKENGMIIVAGADCSIRFMS) and 290-326 (KLSQVYKHSLPVTDMQLSPDSEALVSVSADGLLCLQF). A helical; Signal-anchor for type II membrane protein membrane pass occupies residues 347–367 (LSLMFPFVLAILYFYLQLLFP). Over 368 to 395 (DEKLDAIHRFFSFILHIFSKYTIRNYDL) the chain is Lumenal.

The protein resides in the endoplasmic reticulum membrane. It localises to the golgi apparatus. It is found in the cis-Golgi network membrane. Functionally, required for the formation of transport vesicles from the ER. This function involves the cytoplasmic domain of the protein, which is thought to interact with the small GTP-binding protein sar1. The protein is Membrane glycoprotein spo14 (spo14) of Schizosaccharomyces pombe (strain 972 / ATCC 24843) (Fission yeast).